The chain runs to 346 residues: Very-long-chain 3-oxoacyl-CoA reductase (346 aa).

The helical transmembrane segment at 26-46 threads the bilayer; it reads TASVLLVAGGWFVVSRVWTFL. I71, D126, D134, N153, Y220, K224, I253, and S255 together coordinate NADP(+). Y220 acts as the Proton donor in catalysis. K224 functions as the Lowers pKa of active site Tyr in the catalytic mechanism.

It belongs to the short-chain dehydrogenases/reductases (SDR) family.

Its subcellular location is the endoplasmic reticulum membrane. The enzyme catalyses a very-long-chain (3R)-3-hydroxyacyl-CoA + NADP(+) = a very-long-chain 3-oxoacyl-CoA + NADPH + H(+). It functions in the pathway lipid metabolism; fatty acid biosynthesis. Its function is as follows. Component of the microsomal membrane bound fatty acid elongation system, which produces the 26-carbon very long-chain fatty acids (VLCFA) from palmitate. Catalyzes the reduction of the 3-ketoacyl-CoA intermediate that is formed in each cycle of fatty acid elongation. VLCFAs serve as precursors for ceramide and sphingolipids. The polypeptide is Very-long-chain 3-oxoacyl-CoA reductase (Emericella nidulans (strain FGSC A4 / ATCC 38163 / CBS 112.46 / NRRL 194 / M139) (Aspergillus nidulans)).